Reading from the N-terminus, the 593-residue chain is Efflux pump FUB11 (593 aa).

Positions Met-1 to Pro-45 are disordered. Residues Ser-9–Glu-30 are compositionally biased toward polar residues. Residue Asn-19 is glycosylated (N-linked (GlcNAc...) asparagine). A run of 12 helical transmembrane segments spans residues Trp-98–Tyr-118, Val-135–Ala-155, Phe-167–Ile-187, Phe-195–Met-215, Met-227–Gly-247, Trp-254–Ile-274, Ile-337–Phe-357, Ile-367–Ala-387, Leu-410–Thr-430, Ile-438–Leu-458, Ile-468–Phe-488, and Trp-503–Tyr-523. The tract at residues Thr-570–Ala-593 is disordered.

This sequence belongs to the major facilitator superfamily. DHA1 family. Polyamines/proton antiporter (TC 2.A.1.2.16) subfamily.

The protein localises to the cell membrane. Functionally, efflux pump involved in export of fusaric acid, a mycotoxin with low to moderate toxicity to animals and humans, but with high phytotoxic properties. Constitutes a self-protecting mechanism of the fungus against critical levels of FSA within the cell. The chain is Efflux pump FUB11 from Gibberella moniliformis (strain M3125 / FGSC 7600) (Maize ear and stalk rot fungus).